We begin with the raw amino-acid sequence, 122 residues long: Single-stranded DNA-binding protein (122 aa).

Belongs to the phi29likevirus single-strand-binding protein family. Monomer.

Single-stranded DNA binding protein required for the elongation during viral DNA replication by strand displacement. Displaced viral DNA strands are transiently coated with the ssDNA-binding protein and therefore protected againt nucleases. The latter is then probably removed by the replisome that performs lagging strand synthesis or during the events that lead up to the recombination process. Has helix-destabilizing activity since it removes secondary structure from the ssDNA in replicative intermediates. The sequence is that of Single-stranded DNA-binding protein (5) from Bacillus subtilis (Bacteriophage B103).